The chain runs to 346 residues: MKIELLTTPADAAEVRIEEQIRPARMEDFTGQQRLTDNLKVFISAARMREEALDHVLLSGPPGLGKTTLAHIIAAEMGSSIRATSGPLLDKAGNLAGLLTGLKRGDVLFIDEIHRMPPAVEEYLYSAMEDFRIDIMIDSGPSARAVQLKIEPFTLVGATTRSGLLTSPLRARFGINSRFDYYSPDLLEGIVMRASGILSIGIDQDAASEIAGRSRGTPRIANRLLRRARDFAQVEKAAVISRRIAMKTLECLDIDEEGLDDMDKKIMDTIVNRFSGGPVGVASLAVSVGEEQDTIEEVYEPYLIQAGYLSRTPRGRVATRQALLRFSDGSVSRHTGGLFDADGNLS.

The tract at residues 1–182 (MKIELLTTPA…FGINSRFDYY (182 aa)) is large ATPase domain (RuvB-L). Residues Ile21, Arg22, Gly63, Lys66, Thr67, Thr68, 129–131 (EDF), Arg172, Tyr182, and Arg219 contribute to the ATP site. Thr67 contacts Mg(2+). A small ATPAse domain (RuvB-S) region spans residues 183-253 (SPDLLEGIVM…IAMKTLECLD (71 aa)). The segment at 256 to 346 (EEGLDDMDKK…GLFDADGNLS (91 aa)) is head domain (RuvB-H). Arg311 and Arg316 together coordinate DNA.

The protein belongs to the RuvB family. As to quaternary structure, homohexamer. Forms an RuvA(8)-RuvB(12)-Holliday junction (HJ) complex. HJ DNA is sandwiched between 2 RuvA tetramers; dsDNA enters through RuvA and exits via RuvB. An RuvB hexamer assembles on each DNA strand where it exits the tetramer. Each RuvB hexamer is contacted by two RuvA subunits (via domain III) on 2 adjacent RuvB subunits; this complex drives branch migration. In the full resolvosome a probable DNA-RuvA(4)-RuvB(12)-RuvC(2) complex forms which resolves the HJ.

Its subcellular location is the cytoplasm. The enzyme catalyses ATP + H2O = ADP + phosphate + H(+). Functionally, the RuvA-RuvB-RuvC complex processes Holliday junction (HJ) DNA during genetic recombination and DNA repair, while the RuvA-RuvB complex plays an important role in the rescue of blocked DNA replication forks via replication fork reversal (RFR). RuvA specifically binds to HJ cruciform DNA, conferring on it an open structure. The RuvB hexamer acts as an ATP-dependent pump, pulling dsDNA into and through the RuvAB complex. RuvB forms 2 homohexamers on either side of HJ DNA bound by 1 or 2 RuvA tetramers; 4 subunits per hexamer contact DNA at a time. Coordinated motions by a converter formed by DNA-disengaged RuvB subunits stimulates ATP hydrolysis and nucleotide exchange. Immobilization of the converter enables RuvB to convert the ATP-contained energy into a lever motion, pulling 2 nucleotides of DNA out of the RuvA tetramer per ATP hydrolyzed, thus driving DNA branch migration. The RuvB motors rotate together with the DNA substrate, which together with the progressing nucleotide cycle form the mechanistic basis for DNA recombination by continuous HJ branch migration. Branch migration allows RuvC to scan DNA until it finds its consensus sequence, where it cleaves and resolves cruciform DNA. The chain is Holliday junction branch migration complex subunit RuvB from Chlorobium phaeovibrioides (strain DSM 265 / 1930) (Prosthecochloris vibrioformis (strain DSM 265)).